Reading from the N-terminus, the 161-residue chain is Transcription elongation factor GreA (161 aa).

Residues 8–28 (LTQEGFKQLEKELENLIQVKR) adopt a coiled-coil conformation.

This sequence belongs to the GreA/GreB family.

Functionally, necessary for efficient RNA polymerase transcription elongation past template-encoded arresting sites. The arresting sites in DNA have the property of trapping a certain fraction of elongating RNA polymerases that pass through, resulting in locked ternary complexes. Cleavage of the nascent transcript by cleavage factors such as GreA or GreB allows the resumption of elongation from the new 3'terminus. GreA releases sequences of 2 to 3 nucleotides. The chain is Transcription elongation factor GreA from Mycoplasma genitalium (strain ATCC 33530 / DSM 19775 / NCTC 10195 / G37) (Mycoplasmoides genitalium).